A 187-amino-acid polypeptide reads, in one-letter code: Elongation factor P (187 aa).

The protein belongs to the elongation factor P family.

It is found in the cytoplasm. The protein operates within protein biosynthesis; polypeptide chain elongation. Functionally, involved in peptide bond synthesis. Stimulates efficient translation and peptide-bond synthesis on native or reconstituted 70S ribosomes in vitro. Probably functions indirectly by altering the affinity of the ribosome for aminoacyl-tRNA, thus increasing their reactivity as acceptors for peptidyl transferase. This Nocardioides sp. (strain ATCC BAA-499 / JS614) protein is Elongation factor P.